The following is a 156-amino-acid chain: MNLNATLFAQMVVFLVLAWFTMKFVWPPLINALDERSKKIADGLAAAEKGKAELDAAHKRVDQELAQARNDGQQRIADAEKRAQAVAEEIKANAQAEAARIVAQAKAEAEQQIVKAREALRGEVASLAVKGAEQILKREVDQTAHAQLLNQLKAEL.

Residues 7–29 (LFAQMVVFLVLAWFTMKFVWPPL) form a helical membrane-spanning segment.

The protein belongs to the ATPase B chain family. As to quaternary structure, F-type ATPases have 2 components, F(1) - the catalytic core - and F(0) - the membrane proton channel. F(1) has five subunits: alpha(3), beta(3), gamma(1), delta(1), epsilon(1). F(0) has three main subunits: a(1), b(2) and c(10-14). The alpha and beta chains form an alternating ring which encloses part of the gamma chain. F(1) is attached to F(0) by a central stalk formed by the gamma and epsilon chains, while a peripheral stalk is formed by the delta and b chains.

Its subcellular location is the cell inner membrane. F(1)F(0) ATP synthase produces ATP from ADP in the presence of a proton or sodium gradient. F-type ATPases consist of two structural domains, F(1) containing the extramembraneous catalytic core and F(0) containing the membrane proton channel, linked together by a central stalk and a peripheral stalk. During catalysis, ATP synthesis in the catalytic domain of F(1) is coupled via a rotary mechanism of the central stalk subunits to proton translocation. Functionally, component of the F(0) channel, it forms part of the peripheral stalk, linking F(1) to F(0). This is ATP synthase subunit b from Burkholderia ambifaria (strain MC40-6).